The chain runs to 334 residues: Malate dehydrogenase (334 aa).

Residue 16 to 22 (GAAGQIA) participates in NAD(+) binding. Substrate is bound by residues Arg97 and Arg103. NAD(+) is bound by residues Asn110, Gln117, and 134–136 (VGN). Residues Asn136 and Arg167 each coordinate substrate. His192 (proton acceptor) is an active-site residue.

The protein belongs to the LDH/MDH superfamily. MDH type 2 family.

It catalyses the reaction (S)-malate + NAD(+) = oxaloacetate + NADH + H(+). Catalyzes the reversible oxidation of malate to oxaloacetate. The sequence is that of Malate dehydrogenase from Nocardia farcinica (strain IFM 10152).